The primary structure comprises 114 residues: MSEVIEGNVKIDRISPGDGATFPKTGDLVTIHYTGTLENGQKFDSSVDRGSPFQCNIGVGQVIKGWDVGIPKLSVGEKARLTIPGPYAYGPRGFPGLIPPNSTLVFDVELLKVN.

Ser-2 carries the N-acetylserine modification. A PPIase FKBP-type domain is found at 26-114; that stretch reads GDLVTIHYTG…VFDVELLKVN (89 aa). A Phosphoserine modification is found at Ser-51.

The protein belongs to the FKBP-type PPIase family. FKBP1 subfamily. As to quaternary structure, interacts with HOM3; the interaction is direct, plays a role in feedback inhibition of aspartokinase by threonine, and is inhibited by tacrolimus and sirolimus. Interacts with HMO1. Interacts with FAP1.

It is found in the cytoplasm. The protein localises to the mitochondrion. The enzyme catalyses [protein]-peptidylproline (omega=180) = [protein]-peptidylproline (omega=0). PPIases accelerate the folding of proteins. It catalyzes the cis-trans isomerization of proline imidic peptide bonds in oligopeptides. Plays a role in feedback inhibition of the pathway synthesizing the aspartate family of amino acids by binding to aspartokinase. This Saccharomyces cerevisiae (strain ATCC 204508 / S288c) (Baker's yeast) protein is FK506-binding protein 1 (FPR1).